The sequence spans 199 residues: dITP/XTP pyrophosphatase (199 aa).

Residue 8–13 participates in substrate binding; it reads SGNAGK. Asp69 acts as the Proton acceptor in catalysis. Asp69 is a binding site for Mg(2+). Substrate is bound by residues Ser70, 154–157, Lys177, and 182–183; these read FGYN and HR.

This sequence belongs to the HAM1 NTPase family. As to quaternary structure, homodimer. Mg(2+) is required as a cofactor.

It catalyses the reaction XTP + H2O = XMP + diphosphate + H(+). It carries out the reaction dITP + H2O = dIMP + diphosphate + H(+). The enzyme catalyses ITP + H2O = IMP + diphosphate + H(+). Its function is as follows. Pyrophosphatase that catalyzes the hydrolysis of nucleoside triphosphates to their monophosphate derivatives, with a high preference for the non-canonical purine nucleotides XTP (xanthosine triphosphate), dITP (deoxyinosine triphosphate) and ITP. Seems to function as a house-cleaning enzyme that removes non-canonical purine nucleotides from the nucleotide pool, thus preventing their incorporation into DNA/RNA and avoiding chromosomal lesions. In Xylella fastidiosa (strain 9a5c), this protein is dITP/XTP pyrophosphatase.